A 622-amino-acid chain; its full sequence is Low affinity potassium transport system protein Kup (622 aa).

Transmembrane regions (helical) follow at residues 12–32 (ITLA…LYTL), 49–69 (VFGF…LKYL), 101–121 (FLVI…VITP), 134–154 (IIAP…LTLL), 163–183 (GLVG…LAAL), 213–233 (VSFV…ALYA), 247–267 (WFTV…ALLL), 276–296 (PFFL…ATLA), 337–357 (IYIP…IVSF), 363–383 (LAAA…ILST), 395–415 (FLVA…FSAN), and 419–439 (IVSG…VMTT).

The protein belongs to the HAK/KUP transporter (TC 2.A.72) family.

It localises to the cell inner membrane. The enzyme catalyses K(+)(in) + H(+)(in) = K(+)(out) + H(+)(out). Its function is as follows. Responsible for the low-affinity transport of potassium into the cell. Likely operates as a K(+):H(+) symporter. This is Low affinity potassium transport system protein Kup from Enterobacter sp. (strain 638).